The sequence spans 500 residues: Putative antiporter subunit mnhD2 (500 aa).

Transmembrane regions (helical) follow at residues 2–22 (MSNL…ILVF), 32–52 (ILSI…LIYV), 78–98 (LSLL…AYGF), 108–128 (FHLP…FLTS), 130–150 (LFNL…LVTL), 161–181 (IVYV…IGML), 209–229 (ISLV…FMWL), 240–260 (LAAL…IRFF), 273–293 (TLLV…VIAY), 308–328 (IGFI…GAIF), 330–350 (LAND…LVYM), 368–388 (FFGV…PFSG), 403–423 (GNYI…YSLF), and 450–470 (GLLS…PVVL).

It belongs to the CPA3 antiporters (TC 2.A.63) subunit D family. In terms of assembly, may form a heterooligomeric complex that consists of seven subunits: mnhA2, mnhB2, mnhC2, mnhD2, mnhE2, mnhF2 and mnhG2.

Its subcellular location is the cell membrane. This Staphylococcus epidermidis (strain ATCC 12228 / FDA PCI 1200) protein is Putative antiporter subunit mnhD2 (mnhD2).